Reading from the N-terminus, the 147-residue chain is Biogenesis of lysosome-related organelles complex 1 subunit 1 (147 aa).

Disordered stretches follow at residues 1–25 (MLTS…VRRK) and 125–147 (SSGA…PSAT).

It belongs to the BLOC1S1 family. Component of the biogenesis of lysosome-related organelles complex-1 (BLOC-1) composed of Blos1, Blos2, Blos3, Blos4, Dysb, Muted, Pldn and Snapin. Interacts with Pldn.

Functionally, component of the biogenesis of lysosome-related organelles complex-1 (BLOC-1) involved in pigment granule biogenesis and membrane trafficking in synapses. In response to high synaptic activity at neuromuscular junctions, stabilizes Pldn protein levels and, together with Pldn, plays a role in promoting efficient synaptic vesicle recycling and re-formation through early endosomes. The chain is Biogenesis of lysosome-related organelles complex 1 subunit 1 from Drosophila melanogaster (Fruit fly).